The primary structure comprises 159 residues: Regulatory protein RecX (159 aa).

It belongs to the RecX family.

It is found in the cytoplasm. Modulates RecA activity. This is Regulatory protein RecX from Chlorobium limicola (strain DSM 245 / NBRC 103803 / 6330).